Reading from the N-terminus, the 139-residue chain is Toxin FitB (139 aa).

In terms of domain architecture, PINc spans 2–123 (ILLDTNVISE…HSLTVATRDT (122 aa)). Aspartate 5 and aspartate 104 together coordinate Mg(2+).

This sequence belongs to the PINc/VapC protein family. As to quaternary structure, forms a heterodimer with FitA, 4 FitAB heterodimers form a complex that binds to promoter DNA. The complex is also seen in solution. This protein does not actually contact DNA. The cofactor is Mg(2+).

In terms of biological role, toxic component of a type II toxin-antitoxin (TA) system. Plays a role in the speed with which bacteria traverse human epithelial cells; disruption of the locus increases the speed of trafficking about 2-4-fold. FitAB binds to its own promoter better than FitA alone. The expected nuclease activity was not observed for the FitAB complex, perhaps because FitA (the antitoxin) prevents metal binding and thus catalysis by FitB. The sequence is that of Toxin FitB (fitB) from Neisseria gonorrhoeae (strain ATCC 700825 / FA 1090).